A 164-amino-acid chain; its full sequence is Hydroxylaminobenzene mutase HabB (164 aa).

A run of 4 helical transmembrane segments spans residues 16-36 (LLQL…LLPM), 50-70 (GVLN…LSLG), 78-98 (FGFA…AGFW), and 121-141 (LIAF…ALAL).

Its subcellular location is the cell membrane. It catalyses the reaction N-phenylhydroxylamine = 2-aminophenol. Addition of ZnSO(4) decreases the activity to 70%. Its function is as follows. Catalyzes the rearrangement of hydroxylaminobenzene to 2-aminophenol. The polypeptide is Hydroxylaminobenzene mutase HabB (habB) (Ectopseudomonas oleovorans (Pseudomonas oleovorans)).